Here is an 860-residue protein sequence, read N- to C-terminus: DNA mismatch repair protein MutS (860 aa).

607–614 lines the ATP pocket; the sequence is GPNMSGKS.

The protein belongs to the DNA mismatch repair MutS family.

This protein is involved in the repair of mismatches in DNA. It is possible that it carries out the mismatch recognition step. This protein has a weak ATPase activity. The polypeptide is DNA mismatch repair protein MutS (Listeria welshimeri serovar 6b (strain ATCC 35897 / DSM 20650 / CCUG 15529 / CIP 8149 / NCTC 11857 / SLCC 5334 / V8)).